The sequence spans 1282 residues: Myosin-1 (1282 aa).

A disordered region spans residues 1–30; sequence MAISKKAGAKKAGAVSKPPPSKGASSKGGV. Residues 44-723 enclose the Myosin motor domain; sequence AGVSDMTLLS…TLFALETMRD (680 aa). Position 137 to 144 (137 to 144) interacts with ATP; sequence GESGAGKT. At Ser365 the chain carries Phosphoserine. The tract at residues 412 to 494 is actin-binding; that stretch reads VIGVLDIYGF…PGIFSALNDA (83 aa). The interval 569 to 590 is disordered; sequence LQKLFPDRPDPNSKKRPPTAGD. IQ domains follow at residues 727–747 and 748–773; these read HNMA…KEEC and ARRI…YGHQ. Residues 781 to 977 enclose the TH1 domain; it reads RRRFSLLGLR…AVSVCSGEPA (197 aa). Residues 973–1073 form a disordered region; it reads SGEPANSVSR…PPPAAVAPSE (101 aa). The span at 1029–1058 shows a compositional bias: low complexity; sequence PGSGAAGTARPAAAVGSASAGAGVGATRSA. Positions 1059–1068 are enriched in pro residues; it reads PRPPPPPPAA. Positions 1074-1135 constitute an SH3 domain; it reads PQVARYKALY…PSNYLELIVQ (62 aa). Residues 1237–1282 are disordered; it reads AAAAAAGAGANGKGAGAPPAVAAKPVVAPKPAGSNGRAMPPPPPRR. A compositionally biased stretch (low complexity) spans 1252–1269; the sequence is GAPPAVAAKPVVAPKPAG.

The protein belongs to the TRAFAC class myosin-kinesin ATPase superfamily. Myosin family. In terms of processing, phosphorylation of the TEDS site (Ser-365) is required for the polarization of the actin cytoskeleton. Phosphorylation probably activates the myosin-I ATPase activity.

It localises to the cytoplasm. The protein resides in the cytoskeleton. The protein localises to the actin patch. In terms of biological role, type-I myosin implicated in the organization of the actin cytoskeleton. Required for proper actin cytoskeleton polarization. At the cell cortex, assembles in patch-like structures together with proteins from the actin-polymerizing machinery and promotes actin assembly. Functions as actin nucleation-promoting factor (NPF) for the Arp2/3 complex. In Mycosarcoma maydis (Corn smut fungus), this protein is Myosin-1 (myo1).